The chain runs to 267 residues: Ribosomal RNA small subunit methyltransferase A (267 aa).

Positions 18, 20, 45, 66, 91, and 112 each coordinate S-adenosyl-L-methionine.

The protein belongs to the class I-like SAM-binding methyltransferase superfamily. rRNA adenine N(6)-methyltransferase family. RsmA subfamily.

Its subcellular location is the cytoplasm. It carries out the reaction adenosine(1518)/adenosine(1519) in 16S rRNA + 4 S-adenosyl-L-methionine = N(6)-dimethyladenosine(1518)/N(6)-dimethyladenosine(1519) in 16S rRNA + 4 S-adenosyl-L-homocysteine + 4 H(+). Its function is as follows. Specifically dimethylates two adjacent adenosines (A1518 and A1519) in the loop of a conserved hairpin near the 3'-end of 16S rRNA in the 30S particle. May play a critical role in biogenesis of 30S subunits. The polypeptide is Ribosomal RNA small subunit methyltransferase A (Shewanella pealeana (strain ATCC 700345 / ANG-SQ1)).